The following is a 386-amino-acid chain: Transcription factor GTE1 (386 aa).

Disordered regions lie at residues 66–106 and 340–386; these read GAAQ…KHVS and ANKS…AKKA. The span at 68–78 shows a compositional bias: polar residues; sequence AQTNTSKSNSG. The Bromo domain occupies 105-211; the sequence is VSSPDLMRQF…EKFEEKWLLI (107 aa). An NET domain is found at 263–344; the sequence is RESVVQRCRK…EALKAANKSS (82 aa). The segment covering 345–358 has biased composition (low complexity); sequence GGTNAQNNNNTGTG.

Barely detectable in stems, leaves, siliques, and dry seeds, but was present at considerable levels in roots, flowers and imbibited seeds.

The protein resides in the nucleus. Functionally, transcription activator that plays a role in the promotion of seed germination by both negatively and positively regulating the abscisic acid (ABA) and phytochrome A (phyA) transduction pathways, respectively. The polypeptide is Transcription factor GTE1 (GTE1) (Arabidopsis thaliana (Mouse-ear cress)).